Consider the following 509-residue polypeptide: Cytochrome P450 monooxygenase alt3 (509 aa).

A helical transmembrane segment spans residues 25-45; it reads IITGIIVLPVLYVLLKVIYNL. Cys-450 contacts heme.

This sequence belongs to the cytochrome P450 family. It depends on heme as a cofactor.

It localises to the membrane. The protein operates within secondary metabolite biosynthesis. Cytochrome P450 monooxygenase; part of the gene cluster that mediates the biosynthesis of alternapyrone derivatives. Alternapyrone is a decaketide with octa-methylation from methionine on every C2 unit except the third unit. All the domains in the polyketide synthase alt5 are apparently involved in alternapyrone synthesis, that is, the 8 CMeT, 7 KR, 7 DH, and 4 ER reactions in the 9 KS-mediated condensation steps required for alternapyrone synthesis. the alternapyrone produced by alt5 might be intensively modified by cytochrome P450 monooxygenases alt1, alt2 and alt3 and FAD-dependent oxidoreductase alt4 present in the alt gene cluster. The sequence is that of Cytochrome P450 monooxygenase alt3 from Alternaria solani.